The primary structure comprises 71 residues: Large ribosomal subunit protein bL31 (71 aa).

Residues cysteine 16, cysteine 18, cysteine 37, and cysteine 40 each coordinate Zn(2+).

Belongs to the bacterial ribosomal protein bL31 family. Type A subfamily. As to quaternary structure, part of the 50S ribosomal subunit. Zn(2+) serves as cofactor.

In terms of biological role, binds the 23S rRNA. This Nitratidesulfovibrio vulgaris (strain DSM 19637 / Miyazaki F) (Desulfovibrio vulgaris) protein is Large ribosomal subunit protein bL31.